Consider the following 321-residue polypeptide: MDLKFLDFEQPIAELEAKIEELRHVGFDNEINISEEISKLEEKSRKLTESVFSSLSAWQISQISRHPQRPHSRDYIDLIFQEFHELHGDRAFADDPAIIGGLARLDGAAVLVIGHQKGRDTKEKIHRNFGMPRPEGYRKALRLMRLAERFRLPIVCLIDTPGAYPGINAEERGQSEAIARNLFEMAQLQTPIVCVVIGEGGSGGALAIGVGDRLLMLQYSTYSVISPEGCASILWKSADKAELAAEAMGITSERLMELGLIDSIVPEPLGGAHRDRERMADNLKTELKRNLEELAALPMEELLAMRYERLMGYGVYEEPAT.

In terms of domain architecture, CoA carboxyltransferase C-terminal spans 39-293 (KLEEKSRKLT…KTELKRNLEE (255 aa)).

This sequence belongs to the AccA family. Acetyl-CoA carboxylase is a heterohexamer composed of biotin carboxyl carrier protein (AccB), biotin carboxylase (AccC) and two subunits each of ACCase subunit alpha (AccA) and ACCase subunit beta (AccD).

The protein localises to the cytoplasm. The enzyme catalyses N(6)-carboxybiotinyl-L-lysyl-[protein] + acetyl-CoA = N(6)-biotinyl-L-lysyl-[protein] + malonyl-CoA. It functions in the pathway lipid metabolism; malonyl-CoA biosynthesis; malonyl-CoA from acetyl-CoA: step 1/1. Its function is as follows. Component of the acetyl coenzyme A carboxylase (ACC) complex. First, biotin carboxylase catalyzes the carboxylation of biotin on its carrier protein (BCCP) and then the CO(2) group is transferred by the carboxyltransferase to acetyl-CoA to form malonyl-CoA. This chain is Acetyl-coenzyme A carboxylase carboxyl transferase subunit alpha, found in Methylococcus capsulatus (strain ATCC 33009 / NCIMB 11132 / Bath).